A 156-amino-acid polypeptide reads, in one-letter code: Transcription antitermination protein NusB (156 aa).

The protein belongs to the NusB family.

In terms of biological role, involved in transcription antitermination. Required for transcription of ribosomal RNA (rRNA) genes. Binds specifically to the boxA antiterminator sequence of the ribosomal RNA (rrn) operons. The protein is Transcription antitermination protein NusB of Rickettsia africae (strain ESF-5).